Consider the following 444-residue polypeptide: Trigger factor (444 aa).

Residues 165–250 (GDFAKFDFEG…LHEIQELKIP (86 aa)) form the PPIase FKBP-type domain.

This sequence belongs to the FKBP-type PPIase family. Tig subfamily.

It localises to the cytoplasm. The enzyme catalyses [protein]-peptidylproline (omega=180) = [protein]-peptidylproline (omega=0). Its function is as follows. Involved in protein export. Acts as a chaperone by maintaining the newly synthesized protein in an open conformation. Functions as a peptidyl-prolyl cis-trans isomerase. In Campylobacter jejuni subsp. jejuni serotype O:6 (strain 81116 / NCTC 11828), this protein is Trigger factor.